A 47-amino-acid polypeptide reads, in one-letter code: Photosystem II reaction center protein K (47 aa).

The propeptide occupies M1 to A10. Residues F19–V39 form a helical membrane-spanning segment.

This sequence belongs to the PsbK family. PSII is composed of 1 copy each of membrane proteins PsbA, PsbB, PsbC, PsbD, PsbE, PsbF, PsbH, PsbI, PsbJ, PsbK, PsbL, PsbM, PsbT, PsbX, PsbY, PsbZ, Psb30/Ycf12, peripheral proteins PsbO, CyanoQ (PsbQ), PsbU, PsbV and a large number of cofactors. It forms dimeric complexes.

Its subcellular location is the cellular thylakoid membrane. Functionally, one of the components of the core complex of photosystem II (PSII). PSII is a light-driven water:plastoquinone oxidoreductase that uses light energy to abstract electrons from H(2)O, generating O(2) and a proton gradient subsequently used for ATP formation. It consists of a core antenna complex that captures photons, and an electron transfer chain that converts photonic excitation into a charge separation. This chain is Photosystem II reaction center protein K, found in Parasynechococcus marenigrum (strain WH8102).